A 2218-amino-acid chain; its full sequence is RNA-directed RNA polymerase L (2218 aa).

The endonuclease stretch occupies residues 26 to 288 (KLAFLVQTEP…VAEDNIEHLI (263 aa)). Positions 51, 89, and 102 each coordinate Mn(2+). Residue K115 is part of the active site. The RdRp catalytic domain occupies 1174 to 1370 (LSMKLNVSLA…YMSDQLNKFV (197 aa)). D1332 contributes to the Mg(2+) binding site.

The protein belongs to the Bunyavirales RNA polymerase family. In terms of assembly, homomultimer; the oligomeric structure is essential for the polymerase activity. Interacts with nucleoprotein N. Interacts with protein Z; this interaction inhibits viral transcription and replication, Z partially blocks the product exit tunnel for the releasing nascent RNA product. Requires Mn(2+) as cofactor. The cofactor is Mg(2+).

It is found in the virion. The protein resides in the host cytoplasm. The enzyme catalyses RNA(n) + a ribonucleoside 5'-triphosphate = RNA(n+1) + diphosphate. RNA-dependent RNA polymerase, which is responsible for the replication and transcription of the viral RNA genome using antigenomic RNA as an intermediate. During transcription, synthesizes subgenomic RNAs and assures their capping by a cap-snatching mechanism, which involves the endonuclease activity cleaving the host capped pre-mRNAs. These short capped RNAs are then used as primers for viral transcription. The 3'-end of subgenomic mRNAs molecules are heterogeneous and not polyadenylated. The replicase function is to direct synthesis of antigenomic and genomic RNA which are encapsidated and non capped. As a consequence of the use of the same enzyme for both transcription and replication, these mechanisms need to be well coordinated. These processes may be regulated by proteins N and Z in a dose-dependent manner. Z protein inhibits the viral polymerase L und thus the viral transcription and RNA synthesis. The chain is RNA-directed RNA polymerase L from Lassa virus (strain Mouse/Sierra Leone/Josiah/1976) (LASV).